We begin with the raw amino-acid sequence, 438 residues long: UDP-glycosyltransferase 84B2 (438 aa).

UDP-alpha-D-glucose-binding positions include Ser260, 314–316 (GQQ), 331–339 (HCGWNSTIE), and 353–356 (WIDQ).

Belongs to the UDP-glycosyltransferase family.

The chain is UDP-glycosyltransferase 84B2 (UGT84B2) from Arabidopsis thaliana (Mouse-ear cress).